Reading from the N-terminus, the 518-residue chain is Cytochrome P450 704C1 (518 aa).

2 consecutive transmembrane segments (helical) span residues 5-25 and 299-319; these read ILTMFVTVSALALACSLWIAS and VILNFMVAARDTTAIALSWFI. Cys461 serves as a coordination point for heme.

It belongs to the cytochrome P450 family. The cofactor is heme.

Its subcellular location is the membrane. In Pinus taeda (Loblolly pine), this protein is Cytochrome P450 704C1 (CYP704C1).